Consider the following 788-residue polypeptide: Elongator complex protein 2 (788 aa).

WD repeat units follow at residues 13 to 51, 57 to 96, 102 to 139, 200 to 243, 279 to 318, 336 to 377, 383 to 422, and 437 to 475; these read GANKQTQVSDIHKVKKIVAFGAGKTIALWDPIEPNNKGV, GHEAEVTCVRFVPDSDFMVSASEDHHVKIWKFTDYSHLQC, HYSKTIVALSALPSLISVGCADGTISIWRQNIQNDEFG, GHED…LIDD, GHDDWISSLQWHESRLQLLAATADTSLMVWEPDETSGIWV, GSSG…ICDQ, GATKDVTDIAWSPSGEYLLATSLDQTTRLFAPWIYDASGR, and IHGYDMICVETVTDTRFVSGGDEKILRSFDLPKGVAGML. Positions 490–530 are disordered; that stretch reads PDSATVPVLGLSNKAGEDDANEDDEEEEGGNKETPDITDPL. Ser492 carries the phosphoserine modification. Residues 507-517 are compositionally biased toward acidic residues; the sequence is DDANEDDEEEE. 5 WD repeats span residues 556 to 600, 604 to 643, 651 to 692, 699 to 742, and 750 to 788; these read GHGF…EIKP, FHSLTITRLKFSKDGKFLLSVCRDRKWALWERNMEDNTFE, PHTR…ADDY, KHTK…FELI, and TPADKITRLRWSHLKRNGKLFLGVGSSDLSTRIYSLAYE.

Belongs to the WD repeat ELP2 family. In terms of assembly, component of the elongator complex which consists of ELP1/IKI3, ELP2, ELP3, ELP4, ELP5/IKI1 and ELP6. The elongator complex is composed of two copies of the Elp123 subcomplex (composed of ELP1/IKI3, ELP2 and ELP3) and two copies of the Elp456 subcomplex (composed of ELP4, ELP5/IKI1 and ELP6). The Elp123 subcomplex forms a two-lobed scaffold, which binds the Elp456 subcomplex asymmetrically. In the complex, ELP2 interacts with ELP1/IKI3. In each lobe, ELP2 is tightly sandwiched between ELP1/IKI3 and ELP3. The Elp123 subcomplex binds tRNA through ELP1/IKI3 and ELP3 and can bind 2 tRNAs simultaneously. tRNA-binding induces conformational rearrangements which precisely position the targeted anticodon base in the active site. The Elp456 subcomplex binds tRNA and has ATPase activity. Interacts with KTI11/DPH3.

The protein resides in the cytoplasm. Its subcellular location is the nucleus. It participates in tRNA modification; 5-methoxycarbonylmethyl-2-thiouridine-tRNA biosynthesis. Its function is as follows. Component of the elongator complex, a multiprotein complex which is required for multiple tRNA modifications, including mcm5U (5-methoxycarbonylmethyl uridine), mcm5s2U (5-methoxycarbonylmethyl-2-thiouridine), and ncm5U (5-carbamoylmethyl uridine). The elongator complex catalyzes formation of carboxymethyluridine in the wobble base at position 34 in tRNAs. It functions as a gamma-toxin target (TOT); disruption of the complex confers resistance to Kluyveromyces lactis toxin zymocin (pGKL1 killer toxin). May also be involved in sensitivity to Pichia inositovora toxin. ELP2 binds to microtubules. Independently, ELP2 may be involved in polarized exocytosis. The polypeptide is Elongator complex protein 2 (ELP2) (Saccharomyces cerevisiae (strain ATCC 204508 / S288c) (Baker's yeast)).